Consider the following 444-residue polypeptide: MGDVNFLQKAIQIVQQATEQDNAKNYAEAHRLYIQSLEWFTTALKYEKSERSKATIKAKTLEYLQRAEQLKEYLDKSKNKKPVAVGGNKSNSAGSANGAGKSAKEDDEDMDPEDKKRNDSLSSSIVTTKPNVKWDDVAGLYQAKEYLKEAVIFPIKFPQMFTGNRKPWKGILLYGPPGTGKSYLAKAVATEISSTFFSISPSDIVTKWLGDSEKLVKQLFEMAREKNNSVIFIDEVDSLCSSRNDQESESARRIKTEFLIQMNGVGNDSDGILVLAATNIPWGLDLAIRRRFEKRIYIGLPEPQARAKMFQIHIGSTPNTLVQADYKKLADLTEGYSGSDIGSLVKDAIMQPVRAVQCATHFKQIRAPSREDPSVMTDYVTPCSPGDPLAQEMTWMDIDPTKLKEPEITIADCLKSLRVIKPSVNKADLDRYVEFTNDFGQDGV.

The 79-residue stretch at 2–80 (GDVNFLQKAI…KEYLDKSKNK (79 aa)) folds into the MIT domain. A disordered region spans residues 79-122 (NKKPVAVGGNKSNSAGSANGAGKSAKEDDEDMDPEDKKRNDSLS). Residues 86-101 (GGNKSNSAGSANGAGK) show a composition bias toward low complexity. 175–182 (GPPGTGKS) serves as a coordination point for ATP.

Belongs to the AAA ATPase family.

Its subcellular location is the prevacuolar compartment membrane. The protein localises to the endosome membrane. The catalysed reaction is ATP + H2O = ADP + phosphate + H(+). In terms of biological role, involved in intracellular protein transport probably out of a prevacuolar endosomal compartment. May be involved in the release of components of the bilayered coat from the endosomal membrane. The association with ESCRT-III complex mediates the ATP-dependent disassembly of the ESCRT-III complex. The polypeptide is Vacuolar protein sorting-associated protein 4 (vps4) (Dictyostelium discoideum (Social amoeba)).